Reading from the N-terminus, the 404-residue chain is uncharacterized protein (404 aa).

This is an uncharacterized protein from Ostreid herpesvirus 1 (isolate France) (OsHV-1).